A 1188-amino-acid polypeptide reads, in one-letter code: DNA-directed RNA polymerase subunit beta (1188 aa).

Belongs to the RNA polymerase beta chain family. In terms of assembly, the RNAP catalytic core consists of 2 alpha, 1 beta, 1 beta' and 1 omega subunit. When a sigma factor is associated with the core the holoenzyme is formed, which can initiate transcription.

The catalysed reaction is RNA(n) + a ribonucleoside 5'-triphosphate = RNA(n+1) + diphosphate. Its function is as follows. DNA-dependent RNA polymerase catalyzes the transcription of DNA into RNA using the four ribonucleoside triphosphates as substrates. The protein is DNA-directed RNA polymerase subunit beta of Streptococcus pyogenes serotype M18 (strain MGAS8232).